Reading from the N-terminus, the 29-residue chain is Cyclotide mden-F (29 aa).

Positions 1-29 form a cross-link, cyclopeptide (Gly-Asn); that stretch reads GLPICGETCFFGKCNTPKCTCINPICYKN. 3 cysteine pairs are disulfide-bonded: Cys5/Cys19, Cys9/Cys21, and Cys14/Cys26.

Belongs to the cyclotide family. This is a cyclic peptide.

Its function is as follows. Probably participates in a plant defense mechanism. The chain is Cyclotide mden-F from Melicytus dentatus (Tree violet).